A 199-amino-acid chain; its full sequence is Peroxynitrite isomerase (199 aa).

Positions 20-26 (GVWEGSG) match the GXWXGXG motif. Residues Lys158 and His190 each coordinate heme b.

Belongs to the nitrobindin family. In terms of assembly, homodimer. The cofactor is heme b.

It carries out the reaction peroxynitrite = nitrate. It functions in the pathway nitrogen metabolism. Functionally, heme-binding protein able to scavenge peroxynitrite and to protect free L-tyrosine against peroxynitrite-mediated nitration, by acting as a peroxynitrite isomerase that converts peroxynitrite to nitrate. Therefore, this protein likely plays a role in peroxynitrite sensing and in the detoxification of reactive nitrogen and oxygen species (RNS and ROS, respectively). Is able to bind nitric oxide (NO) in vitro, but may act as a sensor of peroxynitrite levels in vivo. The sequence is that of Peroxynitrite isomerase from Clavibacter sepedonicus (Clavibacter michiganensis subsp. sepedonicus).